The following is a 268-amino-acid chain: Universal stress protein MT3220 (268 aa).

Residues glycine 13, 107–113 (GSVGLDH), arginine 117, and 120–121 (SV) each bind ATP.

This sequence belongs to the universal stress protein A family.

The polypeptide is Universal stress protein MT3220 (Mycobacterium tuberculosis (strain CDC 1551 / Oshkosh)).